We begin with the raw amino-acid sequence, 142 residues long: Hemoglobin subunit alpha (142 aa).

The 141-residue stretch at 2 to 142 (VLSGEDKSNI…VSTVLTSKYR (141 aa)) folds into the Globin domain. Serine 4 bears the Phosphoserine mark. Lysine 8 and lysine 12 each carry N6-succinyllysine. The residue at position 17 (lysine 17) is an N6-acetyllysine; alternate. The residue at position 17 (lysine 17) is an N6-succinyllysine; alternate. Tyrosine 25 carries the post-translational modification Phosphotyrosine. The residue at position 36 (serine 36) is a Phosphoserine. Lysine 41 bears the N6-succinyllysine mark. Serine 50 is modified (phosphoserine). Histidine 59 contacts O2. Histidine 88 serves as a coordination point for heme b. Serine 103 is subject to Phosphoserine. At threonine 109 the chain carries Phosphothreonine. 3 positions are modified to phosphoserine: serine 112, serine 125, and serine 132. Phosphothreonine occurs at positions 135 and 138. Serine 139 carries the post-translational modification Phosphoserine.

This sequence belongs to the globin family. As to quaternary structure, heterotetramer of two alpha chains and two beta chains. As to expression, red blood cells.

Functionally, involved in oxygen transport from the lung to the various peripheral tissues. Its function is as follows. Hemopressin acts as an antagonist peptide of the cannabinoid receptor CNR1. Hemopressin-binding efficiently blocks cannabinoid receptor CNR1 and subsequent signaling. The sequence is that of Hemoglobin subunit alpha (Hba) from Mus musculus (Mouse).